Consider the following 126-residue polypeptide: Methylglyoxal synthase (126 aa).

One can recognise an MGS-like domain in the interval 1-126 (MKALALIAHD…IAWIRKGTPQ (126 aa)). Substrate is bound by residues His9, Lys13, 35 to 38 (TGTT), and 55 to 56 (SG). The active-site Proton donor/acceptor is the Asp61. His88 provides a ligand contact to substrate.

It belongs to the methylglyoxal synthase family.

It carries out the reaction dihydroxyacetone phosphate = methylglyoxal + phosphate. Catalyzes the formation of methylglyoxal from dihydroxyacetone phosphate. The sequence is that of Methylglyoxal synthase from Thermus thermophilus (strain ATCC BAA-163 / DSM 7039 / HB27).